We begin with the raw amino-acid sequence, 424 residues long: MTRSLAVQGGSPVRTRPWPLWPQPAPGAVRALDGVLTSGRWSISGPYRGAASQERRFAQAFAAYNGVEHCVPAASGTASLMLAMEACGIGAGDEVIVPGLSWVASGSTVLGVNAVPVFCDVDPDTLCLDPAAVESALTERTKAIVVVHLYSAVAAMDALRALADRHGLPLLEDCAQAHGAEYRGVKVGALATAGTFSMQHSKVLTSGEGGAVITRDAEFARRVEHLRADGRCLAGQPVGDGQMELVETGELMGSNRCVSEFQAALLVEQLGVLDEQNERRRRNAALLDKLLADEGYRPQTTSEGTSTRTYYTYAARLPEGELTHVDAAAVGEALTAELGFPVAPCYAPITRNRLYDPRSRGRFALGVQHESRIDPKRFELPVCEEAARRTVTVHHAALLGDESDMHDIATAFGKVVRHGALLTG.

An N6-(pyridoxal phosphate)lysine modification is found at lysine 202.

It belongs to the DegT/DnrJ/EryC1 family. L-glutamine:2-deoxy-scyllo-inosose/scyllo-inosose aminotransferase subfamily. Requires pyridoxal 5'-phosphate as cofactor.

The catalysed reaction is 2-deoxy-L-scyllo-inosose + L-glutamine = 2-deoxy-scyllo-inosamine + 2-oxoglutaramate. It carries out the reaction 3-amino-2,3-dideoxy-scyllo-inosose + L-glutamine = 2-deoxystreptamine + 2-oxoglutaramate. The protein operates within metabolic intermediate biosynthesis; 2-deoxystreptamine biosynthesis; 2-deoxystreptamine from D-glucose 6-phosphate: step 2/4. Its pathway is metabolic intermediate biosynthesis; 2-deoxystreptamine biosynthesis; 2-deoxystreptamine from D-glucose 6-phosphate: step 4/4. It participates in antibiotic biosynthesis; paromomycin biosynthesis. In terms of biological role, catalyzes the PLP-dependent transamination of 2-deoxy-scyllo-inosose (2-DOI) to form 2-deoxy-scyllo-inosamine (2-DOIA) using L-glutamine as the amino donor. Also catalyzes the transamination of 3-amino-2,3-dideoxy-scyllo-inosose (keto-2-DOIA) into 2-deoxystreptamine (2-DOS). In Streptomyces paromomycinus (Streptomyces rimosus subsp. paromomycinus), this protein is L-glutamine:2-deoxy-scyllo-inosose aminotransferase (parS).